The chain runs to 464 residues: Myrosinase 1 (464 aa).

Substrate is bound at residue glutamine 19. Zn(2+) contacts are provided by histidine 39 and aspartate 52. Residues histidine 122 and asparagine 166 each contribute to the substrate site. The active-site Nucleophile is glutamate 167. The active-site Proton donor is glutamate 374. An N-linked (GlcNAc...) asparagine glycan is attached at asparagine 397.

Homodimer. In terms of tissue distribution, expressed in the skeletal muscle tissues surrounding the head, abdomen and thorax. Not expressed in flight muscles (at protein level).

The catalysed reaction is a thioglucoside + H2O = a sugar + a thiol.. Hydrolyzes glucosinolates to a labile aglycone. This rapidly undergoes spontaneous rearrangement, eliminating sulfur to yield a number of toxic metabolites. Thereby developing a chemical defense system that exploits and mimics the host plant. The sequence is that of Myrosinase 1 from Brevicoryne brassicae (Mealy cabbage aphid).